The following is a 202-amino-acid chain: B-cell CLL/lymphoma 7 protein family member B (202 aa).

Residues 53–202 are disordered; it reads DSKEKEKSKS…PVVPQTTSES (150 aa). Positions 90 to 99 are enriched in polar residues; sequence ENSNQSSVSD. Over residues 107–123 the composition is skewed to low complexity; it reads SSTNSSPSPQQSESLSP. A phosphoserine mark is found at Ser114, Ser118, Ser120, Ser122, Ser127, Ser148, and Ser152.

It belongs to the BCL7 family.

In terms of biological role, positive regulator of apoptosis. Plays a role in the Wnt signaling pathway, negatively regulating the expression of Wnt signaling components CTNNB1 and HMGA1. Involved in cell cycle progression, maintenance of the nuclear structure and stem cell differentiation. May play a role in lung tumor development or progression. The polypeptide is B-cell CLL/lymphoma 7 protein family member B (Bcl7b) (Mus musculus (Mouse)).